We begin with the raw amino-acid sequence, 174 residues long: NADH-quinone oxidoreductase subunit I (174 aa).

2 4Fe-4S ferredoxin-type domains span residues 44–74 and 90–119; these read LNRY…VEGD and RVYQ…MTND. Cysteine 54, cysteine 57, cysteine 60, cysteine 64, cysteine 99, cysteine 102, cysteine 105, and cysteine 109 together coordinate [4Fe-4S] cluster.

It belongs to the complex I 23 kDa subunit family. In terms of assembly, NDH-1 is composed of 14 different subunits. Subunits NuoA, H, J, K, L, M, N constitute the membrane sector of the complex. It depends on [4Fe-4S] cluster as a cofactor.

The protein localises to the cell membrane. The enzyme catalyses a quinone + NADH + 5 H(+)(in) = a quinol + NAD(+) + 4 H(+)(out). In terms of biological role, NDH-1 shuttles electrons from NADH, via FMN and iron-sulfur (Fe-S) centers, to quinones in the respiratory chain. The immediate electron acceptor for the enzyme in this species is believed to be menaquinone. Couples the redox reaction to proton translocation (for every two electrons transferred, four hydrogen ions are translocated across the cytoplasmic membrane), and thus conserves the redox energy in a proton gradient. The polypeptide is NADH-quinone oxidoreductase subunit I (Mycobacterium sp. (strain JLS)).